We begin with the raw amino-acid sequence, 174 residues long: MTYVVFLLSVMFVMGFVGFSSKPSPIYGGLGLIVSGGVGCGIVLSFGGSFLGLMMFLIYLGGMLVVFGYTTAMATEEYPETWGSNVMILGMFVLGVLMEVGLVVYMVMSDGVEIVVDFKNMGDWVVFEGDEVGLIREDSMGVAALYSYGSWLMVVAGWSLFVSIFIVIEITRGA.

5 helical membrane-spanning segments follow: residues 1–21, 24–44, 46–66, 86–106, and 151–171; these read MTYVVFLLSVMFVMGFVGFSS, SPIYGGLGLIVSGGVGCGIVL, FGGSFLGLMMFLIYLGGMLVV, VMILGMFVLGVLMEVGLVVYM, and WLMVVAGWSLFVSIFIVIEIT.

Belongs to the complex I subunit 6 family. As to quaternary structure, core subunit of respiratory chain NADH dehydrogenase (Complex I) which is composed of 45 different subunits.

The protein resides in the mitochondrion inner membrane. It catalyses the reaction a ubiquinone + NADH + 5 H(+)(in) = a ubiquinol + NAD(+) + 4 H(+)(out). In terms of biological role, core subunit of the mitochondrial membrane respiratory chain NADH dehydrogenase (Complex I) which catalyzes electron transfer from NADH through the respiratory chain, using ubiquinone as an electron acceptor. Essential for the catalytic activity and assembly of complex I. The chain is NADH-ubiquinone oxidoreductase chain 6 (MT-ND6) from Oryctolagus cuniculus (Rabbit).